We begin with the raw amino-acid sequence, 333 residues long: NADH-quinone oxidoreductase subunit H (333 aa).

8 helical membrane-spanning segments follow: residues 15–35 (FFIF…FVTY), 88–108 (FILA…VIPF), 117–137 (IGVG…GVVT), 159–179 (ISYE…AGSL), 191–211 (VWYI…AVAE), 239–259 (WAFF…LITV), 274–296 (IPGA…WFRV), and 313–333 (VLLP…ELFF).

This sequence belongs to the complex I subunit 1 family. NDH-1 is composed of 14 different subunits. Subunits NuoA, H, J, K, L, M, N constitute the membrane sector of the complex.

Its subcellular location is the cell membrane. It catalyses the reaction a quinone + NADH + 5 H(+)(in) = a quinol + NAD(+) + 4 H(+)(out). In terms of biological role, NDH-1 shuttles electrons from NADH, via FMN and iron-sulfur (Fe-S) centers, to quinones in the respiratory chain. The immediate electron acceptor for the enzyme in this species is believed to be ubiquinone. Couples the redox reaction to proton translocation (for every two electrons transferred, four hydrogen ions are translocated across the cytoplasmic membrane), and thus conserves the redox energy in a proton gradient. This subunit may bind ubiquinone. In Bacillus thuringiensis subsp. konkukian (strain 97-27), this protein is NADH-quinone oxidoreductase subunit H.